We begin with the raw amino-acid sequence, 77 residues long: uncharacterized protein (77 aa).

A disordered region spans residues 56 to 77 (SVIPKQQPPSSAAAISESEFED). Over residues 65 to 77 (SSAAAISESEFED) the composition is skewed to low complexity.

This is an uncharacterized protein from Frog virus 3 (isolate Goorha) (FV-3).